We begin with the raw amino-acid sequence, 241 residues long: Translation initiation factor IF-3 (241 aa).

The segment covering 193–203 has biased composition (basic and acidic residues); the sequence is AAEKARQKAIQ. The tract at residues 193-241 is disordered; the sequence is AAEKARQKAIQEGRAAPAQDDTEDEEIEKLERELEEQDDEDDDEAEATE. Positions 212 to 241 are enriched in acidic residues; that stretch reads DDTEDEEIEKLERELEEQDDEDDDEAEATE.

Belongs to the IF-3 family. Monomer.

The protein localises to the cytoplasm. Functionally, IF-3 binds to the 30S ribosomal subunit and shifts the equilibrium between 70S ribosomes and their 50S and 30S subunits in favor of the free subunits, thus enhancing the availability of 30S subunits on which protein synthesis initiation begins. This Sorangium cellulosum (strain So ce56) (Polyangium cellulosum (strain So ce56)) protein is Translation initiation factor IF-3.